The chain runs to 458 residues: Monomethylamine methyltransferase MtmB1 (458 aa).

A non-standard amino acid (pyrrolysine) is located at residue O202.

This sequence belongs to the monomethylamine methyltransferase family.

It carries out the reaction Co(I)-[methylamine-specific corrinoid protein] + methylamine + H(+) = methyl-Co(III)-[methylamine-specific corrinoid protein] + NH4(+). It participates in one-carbon metabolism; methanogenesis from methylamine. Catalyzes the transfer of the methyl group from monomethylamine to the corrinoid cofactor of MtmC. This Methanosarcina barkeri (strain Fusaro / DSM 804) protein is Monomethylamine methyltransferase MtmB1 (mtmB1).